A 136-amino-acid polypeptide reads, in one-letter code: Large ribosomal subunit protein uL16c (136 aa).

It belongs to the universal ribosomal protein uL16 family. As to quaternary structure, part of the 50S ribosomal subunit.

The protein resides in the plastid. Its subcellular location is the chloroplast. The chain is Large ribosomal subunit protein uL16c from Phaseolus angularis (Azuki bean).